The primary structure comprises 353 residues: Photosystem II D2 protein (353 aa).

Thr2 bears the N-acetylthreonine mark. A Phosphothreonine modification is found at Thr2. A helical membrane pass occupies residues 41 to 61 (CAYFALGGWFTGTTFVTSWYT). A chlorophyll a-binding site is contributed by His118. The chain crosses the membrane as a helical span at residues 125 to 141 (GFMLRQFELARSVQLRP). Pheophytin a is bound by residues Gln130 and Asn143. The helical transmembrane segment at 153–166 (VFVSVFLIYPLGQS) threads the bilayer. Chlorophyll a is bound at residue His198. Residues 208–228 (AALLCAIHGATVENTLFEDGD) traverse the membrane as a helical segment. 2 residues coordinate a plastoquinone: His215 and Phe262. Residue His215 participates in Fe cation binding. Fe cation is bound at residue His269. Residues 279 to 295 (GLWMSALGVVGLALNLR) form a helical membrane-spanning segment.

The protein belongs to the reaction center PufL/M/PsbA/D family. In terms of assembly, PSII is composed of 1 copy each of membrane proteins PsbA, PsbB, PsbC, PsbD, PsbE, PsbF, PsbH, PsbI, PsbJ, PsbK, PsbL, PsbM, PsbT, PsbX, PsbY, PsbZ, Psb30/Ycf12, at least 3 peripheral proteins of the oxygen-evolving complex and a large number of cofactors. It forms dimeric complexes. Requires The D1/D2 heterodimer binds P680, chlorophylls that are the primary electron donor of PSII, and subsequent electron acceptors. It shares a non-heme iron and each subunit binds pheophytin, quinone, additional chlorophylls, carotenoids and lipids. There is also a Cl(-1) ion associated with D1 and D2, which is required for oxygen evolution. The PSII complex binds additional chlorophylls, carotenoids and specific lipids. as cofactor.

It is found in the plastid. It localises to the chloroplast thylakoid membrane. The catalysed reaction is 2 a plastoquinone + 4 hnu + 2 H2O = 2 a plastoquinol + O2. Functionally, photosystem II (PSII) is a light-driven water:plastoquinone oxidoreductase that uses light energy to abstract electrons from H(2)O, generating O(2) and a proton gradient subsequently used for ATP formation. It consists of a core antenna complex that captures photons, and an electron transfer chain that converts photonic excitation into a charge separation. The D1/D2 (PsbA/PsbD) reaction center heterodimer binds P680, the primary electron donor of PSII as well as several subsequent electron acceptors. D2 is needed for assembly of a stable PSII complex. In Ranunculus macranthus (Large buttercup), this protein is Photosystem II D2 protein.